Consider the following 380-residue polypeptide: Ubiquitin-like protein 7 (380 aa).

Residues 18 to 98 (TPKSILRLPE…VLRKSWPEPD (81 aa)) form the Ubiquitin-like domain. The tract at residues 200–313 (APMPGTDSSS…SSGVQSGTPI (114 aa)) is disordered. Positions 206 to 221 (DSSSRSMPSSSYRDMP) are enriched in low complexity. Serine 230 carries the phosphoserine modification. Composition is skewed to low complexity over residues 240-253 (TRST…SSRP) and 270-293 (SELA…TPGT). Over residues 294 to 313 (QGHSSGTSPMSSGVQSGTPI) the composition is skewed to polar residues. The 45-residue stretch at 333–377 (SLQSQWQPQLQQLRDMGIQDDELSLRALQATGGDIQAALELIFAG) folds into the UBA domain.

As to quaternary structure, binds ubiquitin. Interacts with MAVS; this interaction enhances TRIM21-dependent 'Lys-27'-linked polyubiquitination of MAVS. In terms of processing, deubiquitinated by OTUD4 which stabilizes UBL7 expression. Ubiquitous. Highly expressed in heart, skeletal muscle, testis, thyroid and adrenal gland.

In terms of biological role, interferon-stimulated protein that positively regulates RNA virus-triggered innate immune signaling. Mechanistically, promotes 'Lys-27'-linked polyubiquitination of MAVS through TRIM21 leading to enhanced the IFN signaling pathway. The chain is Ubiquitin-like protein 7 (UBL7) from Homo sapiens (Human).